The sequence spans 396 residues: MSEFIAENRGADAITRPNWSAVFSVAFCVACLIIVEFLPVSLLTPMAQDLGISEGVAGQSVTVTAFVAMFASLFITQTIQATDRRYVVILFAVLLTLSCLLVSFANSFSLLLIGRACLGLALGGFWAMSASLTMRLVPPRTVPKALSVIFGAVSIALVIAAPLGCFLGELIGWRNVFNAAAAMGVLCIFWIIKSLPSLPGEPSHQKQNTFRLLQRPGVMAGMIAIFMSFAGQFAFFTYIRPVYMTLAGFGVDGLTLVLLSFGIASFVGTSLSSFILKRSVKLALAGAPFVLALSALVLTLWGSDKIVATGVAIIWGLTFALIPVGWSTWITRSLADQAEKAGSIQVAVIQLANTCGAAIGGYALDNIGLTSPLMLSGTLMLLTALLVTAKVKMKKS.

Residues 1 to 21 (MSEFIAENRGADAITRPNWSA) lie on the Cytoplasmic side of the membrane. The helical transmembrane segment at 22–42 (VFSVAFCVACLIIVEFLPVSL) threads the bilayer. At 43–54 (LTPMAQDLGISE) the chain is on the periplasmic side. The helical transmembrane segment at 55–75 (GVAGQSVTVTAFVAMFASLFI) threads the bilayer. Residues 76 to 85 (TQTIQATDRR) are Cytoplasmic-facing. Residues 86-106 (YVVILFAVLLTLSCLLVSFAN) form a helical membrane-spanning segment. Position 107 (Ser-107) is a topological domain, periplasmic. A helical transmembrane segment spans residues 108–128 (FSLLLIGRACLGLALGGFWAM). Residues 129-147 (SASLTMRLVPPRTVPKALS) are Cytoplasmic-facing. Residues 148 to 168 (VIFGAVSIALVIAAPLGCFLG) form a helical membrane-spanning segment. Over 169–175 (ELIGWRN) the chain is Periplasmic. Residues 176-196 (VFNAAAAMGVLCIFWIIKSLP) form a helical membrane-spanning segment. Residues 197-215 (SLPGEPSHQKQNTFRLLQR) are Cytoplasmic-facing. The chain crosses the membrane as a helical span at residues 216–236 (PGVMAGMIAIFMSFAGQFAFF). Residues 237–255 (TYIRPVYMTLAGFGVDGLT) lie on the Periplasmic side of the membrane. The helical transmembrane segment at 256–276 (LVLLSFGIASFVGTSLSSFIL) threads the bilayer. At 277 to 281 (KRSVK) the chain is on the cytoplasmic side. A helical transmembrane segment spans residues 282–302 (LALAGAPFVLALSALVLTLWG). Topologically, residues 303–305 (SDK) are periplasmic. A helical membrane pass occupies residues 306–326 (IVATGVAIIWGLTFALIPVGW). Residues 327 to 343 (STWITRSLADQAEKAGS) are Cytoplasmic-facing. The helical transmembrane segment at 344–364 (IQVAVIQLANTCGAAIGGYAL) threads the bilayer. The Periplasmic portion of the chain corresponds to 365 to 366 (DN). A helical membrane pass occupies residues 367-387 (IGLTSPLMLSGTLMLLTALLV). The Cytoplasmic portion of the chain corresponds to 388–396 (TAKVKMKKS).

It belongs to the major facilitator superfamily. DHA1 family. NepI (TC 2.A.1.2.26) subfamily.

The protein localises to the cell inner membrane. The enzyme catalyses inosine(in) + H(+)(out) = inosine(out) + H(+)(in). It carries out the reaction guanosine(in) + H(+)(out) = guanosine(out) + H(+)(in). Its function is as follows. Involved in the efflux of purine ribonucleosides, such as inosine and guanosine. The polypeptide is Purine ribonucleoside efflux pump NepI (Escherichia coli O157:H7).